We begin with the raw amino-acid sequence, 421 residues long: MVADVLLTHFNQLFCLNDPGHPLTGQEMKKATIVEDGYIAIKDGLIVALGSGEPDAELVGPQTIMRSYKGKIATPGIIDCHTHLVYGGSREHEFAKKLAGVSYLDILAQGGGILSTVRATRSASFDNLYQKSKRLLDYMLLHGVTTVEAKSGYGLDWETEKRQLDVVAALEKDHPIDLVSTFMAAHAIPEEYKGNPKAYLDVIIKDMLPVVKEENLAEFCDIFCEKNVFTADESRYLLSKAKEMGFKLRIHADEIASIGGVDVAAELSAVSAEHLMMITNDDIAKLIGAGVIGNLLPATTFSLMEDTYAPARKMIDAGMAITLSTDSNPGSCPTANMQFVMQLGCFMLRLTPIEVLNAVTINAAYSVNRQERVGSLTVGKEADIAIFDAPNIDYPFYFFATNLIHQVYKKGQLTVDRGRIL.

Fe(3+) is bound by residues histidine 81 and histidine 83. Positions 81 and 83 each coordinate Zn(2+). Arginine 90, tyrosine 153, and histidine 186 together coordinate 4-imidazolone-5-propanoate. Tyrosine 153 is an N-formimidoyl-L-glutamate binding site. Histidine 251 contributes to the Fe(3+) binding site. Zn(2+) is bound at residue histidine 251. Glutamate 254 provides a ligand contact to 4-imidazolone-5-propanoate. Position 326 (aspartate 326) interacts with Fe(3+). Aspartate 326 contributes to the Zn(2+) binding site. N-formimidoyl-L-glutamate-binding residues include asparagine 328 and glycine 330. Residue serine 331 coordinates 4-imidazolone-5-propanoate.

Belongs to the metallo-dependent hydrolases superfamily. HutI family. The cofactor is Zn(2+). Fe(3+) serves as cofactor.

It is found in the cytoplasm. The enzyme catalyses 4-imidazolone-5-propanoate + H2O = N-formimidoyl-L-glutamate. It functions in the pathway amino-acid degradation; L-histidine degradation into L-glutamate; N-formimidoyl-L-glutamate from L-histidine: step 3/3. Catalyzes the hydrolytic cleavage of the carbon-nitrogen bond in imidazolone-5-propanoate to yield N-formimidoyl-L-glutamate. It is the third step in the universal histidine degradation pathway. This chain is Imidazolonepropionase, found in Streptococcus pyogenes serotype M12 (strain MGAS2096).